Reading from the N-terminus, the 134-residue chain is Prolactin (134 aa).

A disulfide bridge connects residues Cys-126 and Cys-134.

Belongs to the somatotropin/prolactin family.

It is found in the secreted. This chain is Prolactin, found in Bufo japonicus (Japanese common toad).